The following is a 741-amino-acid chain: MPISMELPVFSTLRVPLFSRLALLPTFGVPFSSLGATTRLNCTSRKARRICVMCLVRDSAPIETCERAGEDGSDEFIEVLVIGSRKESIMDSCLDSPFPSLPLRFWSISKDSSGGLVLQQRLNHQDNALKTMNPIELLQSRPRAFILVASAGYGSDQVEAINILSAVRSGGNLAVAVLLKPFSFEGRKRLEEVNELARKLQQHTNFCIDIDIEVLLQKDLVTLDEALRNANNAVSMAINAASALISGMHGNFIDVMHKDLKELEGSEVKTILESYKEAKVGFGVGHNLKTSILRAIYDCPFFRPGLKDLNAIICIVASSVPLQKKDVKTILRTFRQTMEYTGDIIVSTVHEPDLEPKVRVTTFFILSSSEVETSNKGNIFSGLVPFVLNIFTRYRSQLQKETNIGLGETPVSIKDSADSTDVKTSNQNIEEFEIDSEDLLEVSENGDDSEYPLKEGEPSRNSRLDLKDENVEDFGAIQREPIANWSMDQGYQIEQKWQADSGDTAVLSLGIVNLPVGVRPSKKLNSNLSVASQLSRKADSREESFFNPNGSTKDSSDTASTLLSEKYADFTKQRNLSARASSMLEAERDSSKRWSPILEMQYRGGLFKGRCQGGLPEGKGRLVLGDGSIYDGMWHNGKRSGLGTFYFKNGDVFQGTWREDLIHGKGWFYFHKGDRWFANFWKGKASGEGRFYSKSGEIFFGHFKDGWRHGQFLCIDLDGTRYSETWDDGVLIDRKQVDAGD.

Residues 1-41 constitute a chloroplast transit peptide; the sequence is MPISMELPVFSTLRVPLFSRLALLPTFGVPFSSLGATTRLN. Disordered stretches follow at residues 444–465 and 539–558; these read ENGD…SRLD and DSRE…SSDT. A compositionally biased stretch (basic and acidic residues) spans 451 to 465; the sequence is YPLKEGEPSRNSRLD. Residues 546 to 558 show a composition bias toward polar residues; that stretch reads FNPNGSTKDSSDT. MORN repeat units follow at residues 612 to 628, 630 to 652, and 653 to 675; these read QGGL…GDGS, YDGM…NGDV, and FQGT…KGDR.

Self-interacts. Interacts with FTSZ, CDP1/PARC6 (via N-terminus), MIND1 and MINE1. Part of a complex made of ARC3, ARC6, FTSZ1 and FTSZ2. Recruited to the middle of the plastid by CDP1/PARC6 where subsequent complex made of CDP1/PARC6, ARC3 and FtsZ proteins can form; this complex enhances the dynamics of Z rings during chloroplast division. Binding to FTSZ2-1 is enabled by ARC6.

Its subcellular location is the plastid. The protein localises to the chloroplast outer membrane. It is found in the chloroplast stroma. Its function is as follows. Together with MIND1 and MCD1, regulates FtsZ ring positioning in chloroplasts in an ARC6-dependent manner. Z-ring accessory protein involved in the initiation of plastid division and division site placement (might functionally replace bacterial MinC). Acts as a disassembly factor that accelerates fragmentation and depolymerization of existing FtsZ2 filaments by enhancing FTSZ2 GTPase activity, thus leading to the conversion of FTSZ2 bound GTP into GDP, a process which triggers FtsZ2 filaments destabilization. Prevents misplaced Z-ring formation at chloroplast stroma nondivision sites. May control the rate of chloroplast expansion. Seems to influence stromule (stroma-filled tubular extensions of the plastid envelope membrane) length and frequency. This Arabidopsis thaliana (Mouse-ear cress) protein is Protein ACCUMULATION AND REPLICATION OF CHLOROPLASTS 3, chloroplastic.